A 505-amino-acid polypeptide reads, in one-letter code: Apolipoprotein N-acyltransferase (505 aa).

7 helical membrane passes run 6 to 26, 29 to 49, 53 to 73, 80 to 100, 119 to 139, 152 to 172, and 189 to 209; these read PSILVACILSFCLGAIGCLAF, FDIWLIAYLSAAGLIWAATLV, TAMLATFAWSIGYFGVGVQWV, FGGVPVIVSYLAVLLLASYLG, FVLASLFTFTEYLRGVVFTGF, PFAQLAPIFGVEGLTFLVILL, and TFTKIAVIIGFSLASNLLQFV. A CN hydrolase domain is found at 223–469; sequence IQANIEQQLK…TNTLTAEIAT (247 aa). Glu-263 functions as the Proton acceptor in the catalytic mechanism. Lys-328 is an active-site residue. Cys-379 acts as the Nucleophile in catalysis. The helical transmembrane segment at 475–495 threads the bilayer; the sequence is LFGQFGHWLIYSLSFICVAFG.

It belongs to the CN hydrolase family. Apolipoprotein N-acyltransferase subfamily.

Its subcellular location is the cell inner membrane. It carries out the reaction N-terminal S-1,2-diacyl-sn-glyceryl-L-cysteinyl-[lipoprotein] + a glycerophospholipid = N-acyl-S-1,2-diacyl-sn-glyceryl-L-cysteinyl-[lipoprotein] + a 2-acyl-sn-glycero-3-phospholipid + H(+). Its pathway is protein modification; lipoprotein biosynthesis (N-acyl transfer). Its function is as follows. Catalyzes the phospholipid dependent N-acylation of the N-terminal cysteine of apolipoprotein, the last step in lipoprotein maturation. The sequence is that of Apolipoprotein N-acyltransferase from Haemophilus ducreyi (strain 35000HP / ATCC 700724).